The sequence spans 121 residues: Large ribosomal subunit protein bL19 (121 aa).

It belongs to the bacterial ribosomal protein bL19 family.

This protein is located at the 30S-50S ribosomal subunit interface and may play a role in the structure and function of the aminoacyl-tRNA binding site. The protein is Large ribosomal subunit protein bL19 of Acidothermus cellulolyticus (strain ATCC 43068 / DSM 8971 / 11B).